The following is a 628-amino-acid chain: Glutamyl-tRNA(Gln) amidotransferase subunit E (628 aa).

This sequence belongs to the GatB/GatE family. GatE subfamily. As to quaternary structure, heterodimer of GatD and GatE.

The catalysed reaction is L-glutamyl-tRNA(Gln) + L-glutamine + ATP + H2O = L-glutaminyl-tRNA(Gln) + L-glutamate + ADP + phosphate + H(+). In terms of biological role, allows the formation of correctly charged Gln-tRNA(Gln) through the transamidation of misacylated Glu-tRNA(Gln) in organisms which lack glutaminyl-tRNA synthetase. The reaction takes place in the presence of glutamine and ATP through an activated gamma-phospho-Glu-tRNA(Gln). The GatDE system is specific for glutamate and does not act on aspartate. In Thermococcus gammatolerans (strain DSM 15229 / JCM 11827 / EJ3), this protein is Glutamyl-tRNA(Gln) amidotransferase subunit E.